We begin with the raw amino-acid sequence, 465 residues long: Glutamate--tRNA ligase (465 aa).

The short motif at 8 to 18 (PSPTGDLHIGG) is the 'HIGH' region element. Residues 235–239 (RLSKR) carry the 'KMSKS' region motif. Residue K238 coordinates ATP.

The protein belongs to the class-I aminoacyl-tRNA synthetase family. Glutamate--tRNA ligase type 1 subfamily. In terms of assembly, monomer.

It is found in the cytoplasm. The catalysed reaction is tRNA(Glu) + L-glutamate + ATP = L-glutamyl-tRNA(Glu) + AMP + diphosphate. Functionally, catalyzes the attachment of glutamate to tRNA(Glu) in a two-step reaction: glutamate is first activated by ATP to form Glu-AMP and then transferred to the acceptor end of tRNA(Glu). The polypeptide is Glutamate--tRNA ligase (Dichelobacter nodosus (strain VCS1703A)).